The following is a 295-amino-acid chain: MPENLQLVIITGMSGAGKTVAVQSFEDMGYFCIDNLPPSLIPKFWELIKESGKVTKIALVIDLRSRTFFREIQDMLVELENTNFIDTTILFLDATDEELVSRYKETRRAHPMAMDGLVTEGIRKERAMLEEIKADAQLVIDTTDLSPRQLRERLNKELATRETHEFRVEMVSFGFKYGLPIDADIVMDVRFLPNPHYIDELRPLTGMDQPVYDYVMGFPETDEFYTKFIDLLRTVLPGYKKEGKSSVTIAIGCTGGQHRSVALTERVGAELKEEDYHVNITHRDRLKRKETVNRS.

12-19 (GMSGAGKT) is a binding site for ATP. Residue 62-65 (DLRS) participates in GTP binding.

It belongs to the RapZ-like family.

Displays ATPase and GTPase activities. This is Nucleotide-binding protein EF_0766 from Enterococcus faecalis (strain ATCC 700802 / V583).